The sequence spans 455 residues: NADH-quinone oxidoreductase subunit N (455 aa).

11 helical membrane passes run 25-45 (AIVP…ISEY), 61-81 (FSVA…ALSH), 99-119 (VFLL…MFFL), 149-169 (FLMG…IYGA), 193-213 (IGIV…PFHF), 257-277 (IQII…IMAL), 285-305 (MFAF…LLTS), 312-332 (LYYA…VMYV), 355-375 (AGIL…SGFF), 391-411 (IVVF…FKII), and 432-452 (IVAV…NVVL).

This sequence belongs to the complex I subunit 2 family. NDH-1 is composed of 14 different subunits. Subunits NuoA, H, J, K, L, M, N constitute the membrane sector of the complex.

The protein resides in the cell inner membrane. It carries out the reaction a quinone + NADH + 5 H(+)(in) = a quinol + NAD(+) + 4 H(+)(out). NDH-1 shuttles electrons from NADH, via FMN and iron-sulfur (Fe-S) centers, to quinones in the respiratory chain. The immediate electron acceptor for the enzyme in this species is believed to be a menaquinone. Couples the redox reaction to proton translocation (for every two electrons transferred, four hydrogen ions are translocated across the cytoplasmic membrane), and thus conserves the redox energy in a proton gradient. This chain is NADH-quinone oxidoreductase subunit N, found in Flavobacterium psychrophilum (strain ATCC 49511 / DSM 21280 / CIP 103535 / JIP02/86).